The following is a 306-amino-acid chain: MGFIAQFLEMLLAERALSKNSILSYKRDLFDFQNYLAKHKLSELNITTENIRDWIEYLASNDLQARSINRKISTIKSYYEFLISENHTAFNPVLNVDLPKYQNKLPEILSIAQIKSLLEHCSQDNSPEGIRLNAMIHLLYASGLRVSELVSLKLADILTNKTSKGEVRKIFSVLGKGNKERVIVINEQAVISIAKYLTIRGVFVNKAKPRNLIYLFPSSALAGYMTRQNFAILLKSAALYAGLNPEYISPHILRHSFASHLLEGGADLRVIQELLGHADISTTQIYTHLQTNHLKKALLRHPLNKN.

Residues 1–83 form the Core-binding (CB) domain; the sequence is MGFIAQFLEM…TIKSYYEFLI (83 aa). The Tyr recombinase domain occupies 104–299; that stretch reads KLPEILSIAQ…QTNHLKKALL (196 aa). Residues Arg-145, Lys-176, His-251, Arg-254, and His-277 contribute to the active site. Tyr-286 acts as the O-(3'-phospho-DNA)-tyrosine intermediate in catalysis.

It belongs to the 'phage' integrase family. XerD subfamily. Forms a cyclic heterotetrameric complex composed of two molecules of XerC and two molecules of XerD.

It is found in the cytoplasm. Site-specific tyrosine recombinase, which acts by catalyzing the cutting and rejoining of the recombining DNA molecules. The XerC-XerD complex is essential to convert dimers of the bacterial chromosome into monomers to permit their segregation at cell division. It also contributes to the segregational stability of plasmids. This is Tyrosine recombinase XerD from Rickettsia conorii (strain ATCC VR-613 / Malish 7).